A 233-amino-acid chain; its full sequence is Triosephosphate isomerase (233 aa).

Residue 8-10 coordinates substrate; sequence NWK. The active-site Electrophile is the His-91. The active-site Proton acceptor is the Glu-155. Substrate-binding residues include Gly-161 and Ser-192.

Belongs to the triosephosphate isomerase family. As to quaternary structure, homodimer.

Its subcellular location is the cytoplasm. It catalyses the reaction D-glyceraldehyde 3-phosphate = dihydroxyacetone phosphate. Its pathway is carbohydrate biosynthesis; gluconeogenesis. It participates in carbohydrate degradation; glycolysis; D-glyceraldehyde 3-phosphate from glycerone phosphate: step 1/1. Involved in the gluconeogenesis. Catalyzes stereospecifically the conversion of dihydroxyacetone phosphate (DHAP) to D-glyceraldehyde-3-phosphate (G3P). In Wolbachia sp. subsp. Brugia malayi (strain TRS), this protein is Triosephosphate isomerase.